Reading from the N-terminus, the 246-residue chain is Transmembrane and ubiquitin-like domain-containing protein 1 (246 aa).

Residues 2 to 30 (TLIEGVGDEVTVLFSVLACLLVLALAWVS) form a required to release iHOPS from membranes region. Residues 11–31 (VTVLFSVLACLLVLALAWVST) form a helical membrane-spanning segment. The disordered stretch occupies residues 34 to 101 (AEGGDPLPQP…TPPAPDSPQE (68 aa)). Pro residues predominate over residues 40–50 (LPQPSGTPTPS). A Phosphothreonine modification is found at Thr-71. At Ser-73 the chain carries Phosphoserine. Thr-92 is modified (phosphothreonine). 2 positions are modified to phosphoserine: Ser-98 and Ser-127. Positions 103 to 176 (LVLRLKFLND…LHCHVSTRVG (74 aa)) constitute a Ubiquitin-like domain. The next 2 helical transmembrane spans lie at 195-215 (IGSL…YCQI) and 221-241 (FPLT…LLAF).

In terms of assembly, interacts with EEF1A1, GRIA2, GRIP1, CAMLG, TUBG1. Interacts with NPM1 and CDKN2A; TMUB1 can enhance interaction between NPM1 and CDKN2A and is proposed to bridge the proteins; proposed to be mediated by iHOPS. Interacts with ERLIN2 and AMFR; TMUB1 promotes the interaction of ERLIN2 with AMFR. In terms of processing, processed by regulated intramembrane proteolysis (RIP)in the N-terminus to release iHOPS from membranes. Ubiquitously expressed with highest levels in mammary and thyroid glands, bone marrow and spleen; limited expression in cardiac, pancreatic and ovarian tissues.

The protein resides in the membrane. The protein localises to the postsynaptic cell membrane. It is found in the recycling endosome. It localises to the cytoplasm. Its subcellular location is the nucleus. The protein resides in the nucleolus. The protein localises to the cytoskeleton. It is found in the microtubule organizing center. It localises to the centrosome. Functionally, involved in sterol-regulated ubiquitination and degradation of HMG-CoA reductase HMGCR. Involved in positive regulation of AMPA-selective glutamate receptor GRIA2 recycling to the cell surface. Acts as a negative regulator of hepatocyte growth during regeneration. Its function is as follows. May contribute to the regulation of translation during cell-cycle progression. May contribute to the regulation of cell proliferation. May be involved in centrosome assembly. Modulates stabilization and nucleolar localization of tumor suppressor CDKN2A and enhances association between CDKN2A and NPM1. The chain is Transmembrane and ubiquitin-like domain-containing protein 1 (TMUB1) from Homo sapiens (Human).